We begin with the raw amino-acid sequence, 147 residues long: Auxin-responsive protein SAUR41 (147 aa).

Belongs to the ARG7 family. Specifically expressed in the quiescent center and cortex or endodermis initials of root stem niches. Expressed in vascular tissues from hypocotyls, petioles and cotyledons.

It is found in the cytoplasm. Plays a role in the regulation of cell expansion, root meristem patterning and auxin transport. This chain is Auxin-responsive protein SAUR41, found in Arabidopsis thaliana (Mouse-ear cress).